A 101-amino-acid chain; its full sequence is NAD(P)H-quinone oxidoreductase subunit 4L, chloroplastic (101 aa).

Helical transmembrane passes span 2 to 22, 32 to 52, and 61 to 81; these read MFEH…YGLI, ICLE…SDLF, and IFAI…LSIL.

This sequence belongs to the complex I subunit 4L family. NDH is composed of at least 16 different subunits, 5 of which are encoded in the nucleus.

It localises to the plastid. The protein localises to the chloroplast thylakoid membrane. It catalyses the reaction a plastoquinone + NADH + (n+1) H(+)(in) = a plastoquinol + NAD(+) + n H(+)(out). It carries out the reaction a plastoquinone + NADPH + (n+1) H(+)(in) = a plastoquinol + NADP(+) + n H(+)(out). In terms of biological role, NDH shuttles electrons from NAD(P)H:plastoquinone, via FMN and iron-sulfur (Fe-S) centers, to quinones in the photosynthetic chain and possibly in a chloroplast respiratory chain. The immediate electron acceptor for the enzyme in this species is believed to be plastoquinone. Couples the redox reaction to proton translocation, and thus conserves the redox energy in a proton gradient. The chain is NAD(P)H-quinone oxidoreductase subunit 4L, chloroplastic from Oryza nivara (Indian wild rice).